The following is a 476-amino-acid chain: Ribulose bisphosphate carboxylase large chain (476 aa).

The propeptide occupies 1–2 (MS). Pro-3 is modified (N-acetylproline). The residue at position 14 (Lys-14) is an N6,N6,N6-trimethyllysine. Asn-123 and Thr-173 together coordinate substrate. Catalysis depends on Lys-175, which acts as the Proton acceptor. Substrate is bound at residue Lys-177. Mg(2+) is bound by residues Lys-201, Asp-203, and Glu-204. Lys-201 bears the N6-carboxylysine mark. His-294 serves as the catalytic Proton acceptor. 3 residues coordinate substrate: Arg-295, His-327, and Ser-379.

The protein belongs to the RuBisCO large chain family. Type I subfamily. In terms of assembly, heterohexadecamer of 8 large chains and 8 small chains; disulfide-linked. The disulfide link is formed within the large subunit homodimers. Mg(2+) serves as cofactor. The disulfide bond which can form in the large chain dimeric partners within the hexadecamer appears to be associated with oxidative stress and protein turnover.

Its subcellular location is the plastid. The protein resides in the chloroplast. The catalysed reaction is 2 (2R)-3-phosphoglycerate + 2 H(+) = D-ribulose 1,5-bisphosphate + CO2 + H2O. It carries out the reaction D-ribulose 1,5-bisphosphate + O2 = 2-phosphoglycolate + (2R)-3-phosphoglycerate + 2 H(+). Functionally, ruBisCO catalyzes two reactions: the carboxylation of D-ribulose 1,5-bisphosphate, the primary event in carbon dioxide fixation, as well as the oxidative fragmentation of the pentose substrate in the photorespiration process. Both reactions occur simultaneously and in competition at the same active site. This is Ribulose bisphosphate carboxylase large chain from Zea mays (Maize).